The sequence spans 418 residues: Lactate dehydrogenase (NAD(+),ferredoxin) subunit LctC (418 aa).

FAD-binding positions include R285, 325 to 328 (IGLS), 343 to 348 (SGAVQF), N362, and 380 to 381 (DL).

It belongs to the ETF alpha-subunit/FixB family. As to quaternary structure, part of the stable heterotrimeric lactate dehydrogenase-Etf complex, which is formed by the lactate dehydrogenase LctD and the electron-transferring flavoprotein (Etf) alpha (LctC) and beta (LctB) subunits. FAD is required as a cofactor. [4Fe-4S] cluster serves as cofactor.

It localises to the cytoplasm. The catalysed reaction is lactate + 2 reduced [2Fe-2S]-[ferredoxin] + 2 NAD(+) = 2 oxidized [2Fe-2S]-[ferredoxin] + pyruvate + 2 NADH. Activity is stimulated by divalent cations. Highest stimulation is observed with Ca(2+). The lactate dehydrogenase-Etf complex catalyzes the oxidation of lactate to pyruvate. It uses flavin-based electron confurcation to drive endergonic lactate oxidation with NAD(+) as oxidant at the expense of simultaneous exergonic electron flow from reduced ferredoxin to NAD(+). The electron transfer flavoprotein (Etf) mediates the electron transfer between the different donors and acceptors. This is Lactate dehydrogenase (NAD(+),ferredoxin) subunit LctC from Acetobacterium woodii (strain ATCC 29683 / DSM 1030 / JCM 2381 / KCTC 1655 / WB1).